The chain runs to 1358 residues: DNA-directed RNA polymerase subunit beta (1358 aa).

This sequence belongs to the RNA polymerase beta chain family. In terms of assembly, the RNAP catalytic core consists of 2 alpha, 1 beta, 1 beta' and 1 omega subunit. When a sigma factor is associated with the core the holoenzyme is formed, which can initiate transcription.

It carries out the reaction RNA(n) + a ribonucleoside 5'-triphosphate = RNA(n+1) + diphosphate. Functionally, DNA-dependent RNA polymerase catalyzes the transcription of DNA into RNA using the four ribonucleoside triphosphates as substrates. The chain is DNA-directed RNA polymerase subunit beta from Thioalkalivibrio sulfidiphilus (strain HL-EbGR7).